Here is a 189-residue protein sequence, read N- to C-terminus: ATP synthase subunit delta (189 aa).

It belongs to the ATPase delta chain family. As to quaternary structure, F-type ATPases have 2 components, F(1) - the catalytic core - and F(0) - the membrane proton channel. F(1) has five subunits: alpha(3), beta(3), gamma(1), delta(1), epsilon(1). F(0) has three main subunits: a(1), b(2) and c(10-14). The alpha and beta chains form an alternating ring which encloses part of the gamma chain. F(1) is attached to F(0) by a central stalk formed by the gamma and epsilon chains, while a peripheral stalk is formed by the delta and b chains.

It is found in the cell inner membrane. Functionally, f(1)F(0) ATP synthase produces ATP from ADP in the presence of a proton or sodium gradient. F-type ATPases consist of two structural domains, F(1) containing the extramembraneous catalytic core and F(0) containing the membrane proton channel, linked together by a central stalk and a peripheral stalk. During catalysis, ATP synthesis in the catalytic domain of F(1) is coupled via a rotary mechanism of the central stalk subunits to proton translocation. Its function is as follows. This protein is part of the stalk that links CF(0) to CF(1). It either transmits conformational changes from CF(0) to CF(1) or is implicated in proton conduction. The sequence is that of ATP synthase subunit delta from Methylorubrum extorquens (strain PA1) (Methylobacterium extorquens).